We begin with the raw amino-acid sequence, 125 residues long: MSGRGKGGKVKAKAKSRSSRAGLQFPVGRIHRLLRKGHYAERIGAGAPVYLAAVMEYLGAEILELAGNAARDNKKTRIIPRHLQLAIRNDEELNKLLSGVTIAQGGVLPNIQAVLLPKKTESKKA.

Basic residues predominate over residues 1 to 18 (MSGRGKGGKVKAKAKSRS). The tract at residues 1–21 (MSGRGKGGKVKAKAKSRSSRA) is disordered. Ser2 is modified (N-acetylserine). Position 2 is a phosphoserine (Ser2). Residue Lys119 forms a Glycyl lysine isopeptide (Lys-Gly) (interchain with G-Cter in ubiquitin) linkage.

This sequence belongs to the histone H2A family. In terms of assembly, the nucleosome is a histone octamer containing two molecules each of H2A, H2B, H3 and H4 assembled in one H3-H4 heterotetramer and two H2A-H2B heterodimers. The octamer wraps approximately 147 bp of DNA. Post-translationally, monoubiquitination of Lys-119 gives a specific tag for epigenetic transcriptional repression. In terms of processing, phosphorylation on Ser-2 is enhanced during mitosis. Phosphorylation on Ser-2 directly represses transcription.

The protein localises to the nucleus. It localises to the chromosome. In terms of biological role, core component of nucleosome. Nucleosomes wrap and compact DNA into chromatin, limiting DNA accessibility to the cellular machineries which require DNA as a template. Histones thereby play a central role in transcription regulation, DNA repair, DNA replication and chromosomal stability. DNA accessibility is regulated via a complex set of post-translational modifications of histones, also called histone code, and nucleosome remodeling. The polypeptide is Histone H2A, orphon (Chironomus thummi thummi (Midge)).